The following is a 393-amino-acid chain: Protein TsgA (393 aa).

Helical transmembrane passes span 11–31 (WISF…GMVM), 51–71 (FLNA…EIVP), 78–98 (FGFI…SLAL), 101–121 (AAMF…TFLI), 134–154 (LLFT…VAAF), 162–182 (WYWV…LTFG), 206–226 (IGVL…LGFI), 245–265 (ALVS…SFIL), 273–293 (ILTV…TGTQ), 298–318 (WFIL…ITLG), 332–352 (FILT…GPIV), and 361–381 (LLTA…LGFV).

This sequence belongs to the major facilitator superfamily. TsgA family.

It is found in the cell inner membrane. This chain is Protein TsgA, found in Salmonella gallinarum (strain 287/91 / NCTC 13346).